The following is a 314-amino-acid chain: Homoserine kinase (314 aa).

96–106 (PIGSGLGSSAC) is an ATP binding site.

It belongs to the GHMP kinase family. Homoserine kinase subfamily.

The protein localises to the cytoplasm. It catalyses the reaction L-homoserine + ATP = O-phospho-L-homoserine + ADP + H(+). The protein operates within amino-acid biosynthesis; L-threonine biosynthesis; L-threonine from L-aspartate: step 4/5. Catalyzes the ATP-dependent phosphorylation of L-homoserine to L-homoserine phosphate. This chain is Homoserine kinase, found in Haemophilus influenzae (strain 86-028NP).